The sequence spans 183 residues: Peptidyl-tRNA hydrolase (183 aa).

Tyr-14 serves as a coordination point for tRNA. The Proton acceptor role is filled by His-19. TRNA contacts are provided by Tyr-55 and Asn-57.

Belongs to the PTH family. Monomer.

The protein localises to the cytoplasm. The enzyme catalyses an N-acyl-L-alpha-aminoacyl-tRNA + H2O = an N-acyl-L-amino acid + a tRNA + H(+). In terms of biological role, hydrolyzes ribosome-free peptidyl-tRNAs (with 1 or more amino acids incorporated), which drop off the ribosome during protein synthesis, or as a result of ribosome stalling. Catalyzes the release of premature peptidyl moieties from peptidyl-tRNA molecules trapped in stalled 50S ribosomal subunits, and thus maintains levels of free tRNAs and 50S ribosomes. The polypeptide is Peptidyl-tRNA hydrolase (Thermus thermophilus (strain ATCC BAA-163 / DSM 7039 / HB27)).